The chain runs to 257 residues: MLRVAWRTLSLIRTRAVTQVLVPGLPGGGSAKFPFNQWGLQPRSLLLQAARGYVVRKPAQSRLDDDPPPSTLLKDYQNVPGIEKVDDVVKRLLSLEMANKKEMLKIKQEQFMKKIVANPEDTRSLEARIIALSVKIRSYEEHLEKHRKDKAHKRYLLMSIDQRKKMLKNLRNTNYDVFEKICWGLGIEYTFPPLYYRRAHRRFVTKKALCIRVFQETQKLKKRRRALKAAAAAQKQAKRRNPDSPAKAIPKTLKDSQ.

A mitochondrion-targeting transit peptide spans 1–57 (MLRVAWRTLSLIRTRAVTQVLVPGLPGGGSAKFPFNQWGLQPRSLLLQAARGYVVRK). Positions 225 to 257 (RALKAAAAAQKQAKRRNPDSPAKAIPKTLKDSQ) are disordered.

Belongs to the universal ribosomal protein uS15 family. As to quaternary structure, component of the mitochondrial small ribosomal subunit (mt-SSU). Mature mammalian 55S mitochondrial ribosomes consist of a small (28S) and a large (39S) subunit. The 28S small subunit contains a 12S ribosomal RNA (12S mt-rRNA) and 30 different proteins. The 39S large subunit contains a 16S rRNA (16S mt-rRNA), a copy of mitochondrial valine transfer RNA (mt-tRNA(Val)), which plays an integral structural role, and 52 different proteins. Interacts with METTL17.

The protein resides in the mitochondrion matrix. This Homo sapiens (Human) protein is Small ribosomal subunit protein uS15m (MRPS15).